The following is a 371-amino-acid chain: Hsc70-interacting protein (371 aa).

A disordered region spans residues 38-80 (MGGKVPPATHKAKSEENTKEEKRDKTTEENIKTEELSSEESDL). Residues 49-72 (AKSEENTKEEKRDKTTEENIKTEE) show a composition bias toward basic and acidic residues. TPR repeat units lie at residues 113–146 (ANEK…NPRL), 147–180 (AILY…NPDS), and 181–214 (AQPY…DYDE). Over residues 255–271 (KAREEHERAQREEEARR) the composition is skewed to basic and acidic residues. The segment at 255 to 296 (KAREEHERAQREEEARRQSGSQYGSFPGGFPGGMPGNFPGGM) is disordered. Gly residues predominate over residues 280–296 (FPGGFPGGMPGNFPGGM). The STI1 domain occupies 321 to 360 (DPEVLAAMQDPEVMVAFQDVAQNPSNMSKYQSNPKVMNLI). Phosphoserine; by GRK5 is present on S348. Residues K355 and K362 each carry the N6-acetyllysine modification.

It belongs to the FAM10 family. Homotetramer. Interacts with HSC70 as well as DNAJ homologs and HSP90. Interacts (via the C-terminus 302- 318 AA) with GRK5.

The protein resides in the cytoplasm. Its function is as follows. One HIP oligomer binds the ATPase domains of at least two HSC70 molecules dependent on activation of the HSC70 ATPase by HSP40. Stabilizes the ADP state of HSC70 that has a high affinity for substrate protein. Through its own chaperone activity, it may contribute to the interaction of HSC70 with various target proteins. The chain is Hsc70-interacting protein (St13) from Mus musculus (Mouse).